The chain runs to 276 residues: Thiazole synthase (276 aa).

Residue K112 is the Schiff-base intermediate with DXP of the active site. Residues G173, 199–200 (AG), and 221–222 (NT) contribute to the 1-deoxy-D-xylulose 5-phosphate site.

It belongs to the ThiG family. In terms of assembly, homotetramer. Forms heterodimers with either ThiH or ThiS.

It localises to the cytoplasm. The catalysed reaction is [ThiS sulfur-carrier protein]-C-terminal-Gly-aminoethanethioate + 2-iminoacetate + 1-deoxy-D-xylulose 5-phosphate = [ThiS sulfur-carrier protein]-C-terminal Gly-Gly + 2-[(2R,5Z)-2-carboxy-4-methylthiazol-5(2H)-ylidene]ethyl phosphate + 2 H2O + H(+). It participates in cofactor biosynthesis; thiamine diphosphate biosynthesis. Functionally, catalyzes the rearrangement of 1-deoxy-D-xylulose 5-phosphate (DXP) to produce the thiazole phosphate moiety of thiamine. Sulfur is provided by the thiocarboxylate moiety of the carrier protein ThiS. In vitro, sulfur can be provided by H(2)S. This Synechococcus sp. (strain ATCC 27144 / PCC 6301 / SAUG 1402/1) (Anacystis nidulans) protein is Thiazole synthase.